We begin with the raw amino-acid sequence, 377 residues long: Gastricsin (377 aa).

The N-terminal stretch at 1–5 is a signal peptide; the sequence is QLLEA. 2 propeptides (activation peptide) span residues 6–31 and 32–48; these read AVVK…LGEF and LRTH…FGDL. The Peptidase A1 domain occupies 62–374; that stretch reads YFGEISIGTP…DLSNNRVGFA (313 aa). Residue D80 is part of the active site. 2 disulfide bridges follow: C93–C98 and C256–C260. D265 is a catalytic residue. Cysteines 299 and 332 form a disulfide.

Belongs to the peptidase A1 family. Post-translationally, each pepsinogen is converted to corresponding pepsin at pH 2.0 in part as a result of the release of a 47 AA activation segment and in part as a result of stepwise proteolytic cleavage via an intermediate form(s).

The protein localises to the secreted. The catalysed reaction is More restricted specificity than pepsin A, but shows preferential cleavage at Tyr-|-Xaa bonds. High activity on hemoglobin.. Hydrolyzes a variety of proteins. The polypeptide is Gastricsin (PGC) (Macaca fuscata fuscata (Japanese macaque)).